The primary structure comprises 234 residues: Triosephosphate isomerase (234 aa).

Position 8 to 10 (8 to 10) interacts with substrate; that stretch reads NFK. His-90 serves as the catalytic Electrophile. Glu-159 acts as the Proton acceptor in catalysis. Substrate is bound by residues Gly-165, Ser-197, and 218–219; that span reads GS.

As to quaternary structure, homodimer.

The protein resides in the cytoplasm. It catalyses the reaction D-glyceraldehyde 3-phosphate = dihydroxyacetone phosphate. Its pathway is carbohydrate biosynthesis; gluconeogenesis. It participates in carbohydrate degradation; glycolysis; D-glyceraldehyde 3-phosphate from glycerone phosphate: step 1/1. In terms of biological role, involved in the gluconeogenesis. Catalyzes stereospecifically the conversion of dihydroxyacetone phosphate (DHAP) to D-glyceraldehyde-3-phosphate (G3P). The chain is Triosephosphate isomerase from Helicobacter pylori (strain ATCC 700392 / 26695) (Campylobacter pylori).